Here is a 131-residue protein sequence, read N- to C-terminus: MSWQTYVDDHLMCEIEGNHLTSAAIIGQDGSVWAQSSTFPQFKPEEITAIMNDFNEPGSLAPTGLYLSGTKYMVIQGEPGAVIRGKKGPGGVTVKKTNQALIIGIYDEPMTPGQCNMIVERLGDYLIDQGL.

This sequence belongs to the profilin family. In terms of assembly, occurs in many kinds of cells as a complex with monomeric actin in a 1:1 ratio.

Its subcellular location is the cytoplasm. It localises to the cytoskeleton. Functionally, binds to actin and affects the structure of the cytoskeleton. At high concentrations, profilin prevents the polymerization of actin, whereas it enhances it at low concentrations. By binding to PIP2, it inhibits the formation of IP3 and DG. The polypeptide is Profilin-1 (PRO1) (Ricinus communis (Castor bean)).